Consider the following 383-residue polypeptide: Lipid-A-disaccharide synthase (383 aa).

This sequence belongs to the LpxB family.

It catalyses the reaction 2-N,3-O-bis[(3R)-3-hydroxytetradecanoyl]-alpha-D-glucosaminyl 1-phosphate + UDP-2-N,3-O-bis[(3R)-3-hydroxytetradecanoyl]-alpha-D-glucosamine = lipid A disaccharide (E. coli) + UDP + H(+). It carries out the reaction a lipid X + a UDP-2-N,3-O-bis[(3R)-3-hydroxyacyl]-alpha-D-glucosamine = a lipid A disaccharide + UDP + H(+). Its pathway is glycolipid biosynthesis; lipid IV(A) biosynthesis; lipid IV(A) from (3R)-3-hydroxytetradecanoyl-[acyl-carrier-protein] and UDP-N-acetyl-alpha-D-glucosamine: step 5/6. In terms of biological role, condensation of UDP-2,3-diacylglucosamine and 2,3-diacylglucosamine-1-phosphate to form lipid A disaccharide, a precursor of lipid A, a phosphorylated glycolipid that anchors the lipopolysaccharide to the outer membrane of the cell. The chain is Lipid-A-disaccharide synthase from Pectobacterium atrosepticum (strain SCRI 1043 / ATCC BAA-672) (Erwinia carotovora subsp. atroseptica).